Consider the following 406-residue polypeptide: Gustatory receptor for sugar taste 64b (406 aa).

The Cytoplasmic portion of the chain corresponds to 1–47 (MPQGETFHRAVSNVLFISQIYGLLPVSNVRALDVADIRFRWCSPRIL). A helical transmembrane segment spans residues 48–68 (YSLLIGILNLSEFGAVINYVI). The Extracellular segment spans residues 69 to 79 (KVTINFHTSST). Residues 80-100 (LSLYIVCLLEHLFFWRLAIQW) form a helical membrane-spanning segment. Residues 101-130 (PRIMRTWHGVEQLFLRVPYRFYGEYRIKRR) are Cytoplasmic-facing. Residues 131–151 (IYIVFTIVMSSALVEHCLLLG) form a helical membrane-spanning segment. The Extracellular segment spans residues 152-183 (NSFHLSNMERTQCKINVTYFESIYKWERPHLY). The N-linked (GlcNAc...) asparagine glycan is linked to Asn167. A helical membrane pass occupies residues 184–204 (MILPYHFWMLPILEWVNQTIA). Over 205 to 265 (YPRSFTDCFI…KRLVHLLDAA (61 aa)) the chain is Cytoplasmic. A helical membrane pass occupies residues 266–286 (IAPLVLLAFGNNMSFICFQLF). The Extracellular portion of the chain corresponds to 287–290 (NSFK). A helical membrane pass occupies residues 291–311 (NIGVDFLVMLAFWYSLGFAVV). Residues 312–370 (RTLLTIFVASSINDYERKIVTALRDVPSRAWSIEVQRFSEQLGNDTTALSGSGFFYLTR) are Cytoplasmic-facing. A helical membrane pass occupies residues 371–391 (SLVLAMGTTIITYELMISDVI). Residues 392–406 (NQGSIRQKTQYCREY) are Extracellular-facing.

Belongs to the insect chemoreceptor superfamily. Gustatory receptor (GR) family. Gr5a subfamily. As to expression, expressed in Gr5a-expressing sugar-sensing cells.

The protein localises to the cell membrane. In terms of biological role, one of the few identified sugar gustatory receptors identified so far and which promotes the starvation-induced increase of feeding motivation. This Drosophila melanogaster (Fruit fly) protein is Gustatory receptor for sugar taste 64b (Gr64b).